The chain runs to 273 residues: Formamidopyrimidine-DNA glycosylase (273 aa).

Residue proline 2 is the Schiff-base intermediate with DNA of the active site. Glutamate 3 acts as the Proton donor in catalysis. Lysine 58 acts as the Proton donor; for beta-elimination activity in catalysis. The DNA site is built by histidine 91 and arginine 110. An FPG-type zinc finger spans residues 238-272 (QVYGKTDQPCARCATPIEKIKVGGRGTHFCPSCQK). The active-site Proton donor; for delta-elimination activity is the arginine 262.

The protein belongs to the FPG family. Monomer. Requires Zn(2+) as cofactor.

It carries out the reaction Hydrolysis of DNA containing ring-opened 7-methylguanine residues, releasing 2,6-diamino-4-hydroxy-5-(N-methyl)formamidopyrimidine.. The enzyme catalyses 2'-deoxyribonucleotide-(2'-deoxyribose 5'-phosphate)-2'-deoxyribonucleotide-DNA = a 3'-end 2'-deoxyribonucleotide-(2,3-dehydro-2,3-deoxyribose 5'-phosphate)-DNA + a 5'-end 5'-phospho-2'-deoxyribonucleoside-DNA + H(+). Functionally, involved in base excision repair of DNA damaged by oxidation or by mutagenic agents. Acts as a DNA glycosylase that recognizes and removes damaged bases. Has a preference for oxidized purines, such as 7,8-dihydro-8-oxoguanine (8-oxoG). Has AP (apurinic/apyrimidinic) lyase activity and introduces nicks in the DNA strand. Cleaves the DNA backbone by beta-delta elimination to generate a single-strand break at the site of the removed base with both 3'- and 5'-phosphates. This is Formamidopyrimidine-DNA glycosylase (mutM) from Streptococcus mutans serotype c (strain ATCC 700610 / UA159).